The primary structure comprises 178 residues: Large ribosomal subunit protein uL30 (178 aa).

The protein belongs to the universal ribosomal protein uL30 family. Part of the 50S ribosomal subunit.

In Pyrobaculum aerophilum (strain ATCC 51768 / DSM 7523 / JCM 9630 / CIP 104966 / NBRC 100827 / IM2), this protein is Large ribosomal subunit protein uL30.